Consider the following 363-residue polypeptide: NADH-quinone oxidoreductase subunit H (363 aa).

The next 10 membrane-spanning stretches (helical) occupy residues 29-49 (VLKI…YVVW), 62-82 (GPMY…KLLF), 94-114 (VIFV…WAVV), 127-147 (VGLL…ILAG), 166-186 (VVSY…AAGS), 202-222 (FFDW…VSGV), 239-257 (IVAG…LFFL), 264-286 (ILVS…QGWV), 293-313 (LIDW…LFFA), and 339-359 (FIPL…SGVI).

This sequence belongs to the complex I subunit 1 family. In terms of assembly, NDH-1 is composed of 14 different subunits. Subunits NuoA, H, J, K, L, M, N constitute the membrane sector of the complex.

Its subcellular location is the cell inner membrane. The catalysed reaction is a quinone + NADH + 5 H(+)(in) = a quinol + NAD(+) + 4 H(+)(out). In terms of biological role, NDH-1 shuttles electrons from NADH, via FMN and iron-sulfur (Fe-S) centers, to quinones in the respiratory chain. The immediate electron acceptor for the enzyme in this species is believed to be ubiquinone. Couples the redox reaction to proton translocation (for every two electrons transferred, four hydrogen ions are translocated across the cytoplasmic membrane), and thus conserves the redox energy in a proton gradient. This subunit may bind ubiquinone. The sequence is that of NADH-quinone oxidoreductase subunit H from Xylella fastidiosa (strain M12).